A 139-amino-acid polypeptide reads, in one-letter code: Putative pre-16S rRNA nuclease (139 aa).

Belongs to the YqgF nuclease family.

The protein resides in the cytoplasm. In terms of biological role, could be a nuclease involved in processing of the 5'-end of pre-16S rRNA. This chain is Putative pre-16S rRNA nuclease, found in Pectobacterium atrosepticum (strain SCRI 1043 / ATCC BAA-672) (Erwinia carotovora subsp. atroseptica).